The chain runs to 421 residues: Gamma-glutamyl phosphate reductase (421 aa).

This sequence belongs to the gamma-glutamyl phosphate reductase family.

The protein localises to the cytoplasm. The enzyme catalyses L-glutamate 5-semialdehyde + phosphate + NADP(+) = L-glutamyl 5-phosphate + NADPH + H(+). Its pathway is amino-acid biosynthesis; L-proline biosynthesis; L-glutamate 5-semialdehyde from L-glutamate: step 2/2. Catalyzes the NADPH-dependent reduction of L-glutamate 5-phosphate into L-glutamate 5-semialdehyde and phosphate. The product spontaneously undergoes cyclization to form 1-pyrroline-5-carboxylate. The protein is Gamma-glutamyl phosphate reductase of Brucella suis biovar 1 (strain 1330).